The sequence spans 366 residues: UDP-N-acetylglucosamine--N-acetylmuramyl-(pentapeptide) pyrophosphoryl-undecaprenol N-acetylglucosamine transferase (366 aa).

UDP-N-acetyl-alpha-D-glucosamine is bound by residues 10 to 12 (TGG), N124, R165, S195, I250, and Q295.

The protein belongs to the glycosyltransferase 28 family. MurG subfamily.

Its subcellular location is the cell inner membrane. The catalysed reaction is di-trans,octa-cis-undecaprenyl diphospho-N-acetyl-alpha-D-muramoyl-L-alanyl-D-glutamyl-meso-2,6-diaminopimeloyl-D-alanyl-D-alanine + UDP-N-acetyl-alpha-D-glucosamine = di-trans,octa-cis-undecaprenyl diphospho-[N-acetyl-alpha-D-glucosaminyl-(1-&gt;4)]-N-acetyl-alpha-D-muramoyl-L-alanyl-D-glutamyl-meso-2,6-diaminopimeloyl-D-alanyl-D-alanine + UDP + H(+). It functions in the pathway cell wall biogenesis; peptidoglycan biosynthesis. Its function is as follows. Cell wall formation. Catalyzes the transfer of a GlcNAc subunit on undecaprenyl-pyrophosphoryl-MurNAc-pentapeptide (lipid intermediate I) to form undecaprenyl-pyrophosphoryl-MurNAc-(pentapeptide)GlcNAc (lipid intermediate II). This is UDP-N-acetylglucosamine--N-acetylmuramyl-(pentapeptide) pyrophosphoryl-undecaprenol N-acetylglucosamine transferase from Thermodesulfovibrio yellowstonii (strain ATCC 51303 / DSM 11347 / YP87).